Consider the following 452-residue polypeptide: UDP-N-acetylmuramoylalanine--D-glutamate ligase (452 aa).

113 to 119 (GTNGKTT) lines the ATP pocket.

This sequence belongs to the MurCDEF family.

The protein resides in the cytoplasm. It catalyses the reaction UDP-N-acetyl-alpha-D-muramoyl-L-alanine + D-glutamate + ATP = UDP-N-acetyl-alpha-D-muramoyl-L-alanyl-D-glutamate + ADP + phosphate + H(+). It participates in cell wall biogenesis; peptidoglycan biosynthesis. Its function is as follows. Cell wall formation. Catalyzes the addition of glutamate to the nucleotide precursor UDP-N-acetylmuramoyl-L-alanine (UMA). The polypeptide is UDP-N-acetylmuramoylalanine--D-glutamate ligase (murD) (Synechocystis sp. (strain ATCC 27184 / PCC 6803 / Kazusa)).